Here is a 404-residue protein sequence, read N- to C-terminus: Cysteine desulfurase IscS (404 aa).

Pyridoxal 5'-phosphate contacts are provided by residues alanine 75–threonine 76, asparagine 155, glutamine 183, and serine 203–histidine 205. Position 206 is an N6-(pyridoxal phosphate)lysine (lysine 206). Residue threonine 243 coordinates pyridoxal 5'-phosphate. The active-site Cysteine persulfide intermediate is cysteine 328. Residue cysteine 328 participates in [2Fe-2S] cluster binding.

It belongs to the class-V pyridoxal-phosphate-dependent aminotransferase family. NifS/IscS subfamily. In terms of assembly, homodimer. Forms a heterotetramer with IscU, interacts with other sulfur acceptors. Requires pyridoxal 5'-phosphate as cofactor.

The protein localises to the cytoplasm. The enzyme catalyses (sulfur carrier)-H + L-cysteine = (sulfur carrier)-SH + L-alanine. Its pathway is cofactor biosynthesis; iron-sulfur cluster biosynthesis. In terms of biological role, master enzyme that delivers sulfur to a number of partners involved in Fe-S cluster assembly, tRNA modification or cofactor biosynthesis. Catalyzes the removal of elemental sulfur atoms from cysteine to produce alanine. Functions as a sulfur delivery protein for Fe-S cluster synthesis onto IscU, an Fe-S scaffold assembly protein, as well as other S acceptor proteins. The chain is Cysteine desulfurase IscS from Pseudomonas fluorescens (strain ATCC BAA-477 / NRRL B-23932 / Pf-5).